A 195-amino-acid polypeptide reads, in one-letter code: Dephospho-CoA kinase (195 aa).

Positions 4-195 (IIGLTGGIAS…EQILDALQRL (192 aa)) constitute a DPCK domain. 12–17 (ASGKST) lines the ATP pocket.

Belongs to the CoaE family.

The protein localises to the cytoplasm. The catalysed reaction is 3'-dephospho-CoA + ATP = ADP + CoA + H(+). It functions in the pathway cofactor biosynthesis; coenzyme A biosynthesis; CoA from (R)-pantothenate: step 5/5. Catalyzes the phosphorylation of the 3'-hydroxyl group of dephosphocoenzyme A to form coenzyme A. The chain is Dephospho-CoA kinase from Streptococcus agalactiae serotype III (strain NEM316).